We begin with the raw amino-acid sequence, 483 residues long: Glutamyl-tRNA(Gln) amidotransferase subunit A (483 aa).

Residues Lys75 and Ser150 each act as charge relay system in the active site. Ser174 functions as the Acyl-ester intermediate in the catalytic mechanism.

Belongs to the amidase family. GatA subfamily. Heterotrimer of A, B and C subunits.

The catalysed reaction is L-glutamyl-tRNA(Gln) + L-glutamine + ATP + H2O = L-glutaminyl-tRNA(Gln) + L-glutamate + ADP + phosphate + H(+). In terms of biological role, allows the formation of correctly charged Gln-tRNA(Gln) through the transamidation of misacylated Glu-tRNA(Gln) in organisms which lack glutaminyl-tRNA synthetase. The reaction takes place in the presence of glutamine and ATP through an activated gamma-phospho-Glu-tRNA(Gln). In Legionella pneumophila (strain Corby), this protein is Glutamyl-tRNA(Gln) amidotransferase subunit A.